A 468-amino-acid polypeptide reads, in one-letter code: ATP synthase subunit beta (468 aa).

Position 155-162 (G155–T162) interacts with ATP.

Belongs to the ATPase alpha/beta chains family. As to quaternary structure, F-type ATPases have 2 components, CF(1) - the catalytic core - and CF(0) - the membrane proton channel. CF(1) has five subunits: alpha(3), beta(3), gamma(1), delta(1), epsilon(1). CF(0) has three main subunits: a(1), b(2) and c(9-12). The alpha and beta chains form an alternating ring which encloses part of the gamma chain. CF(1) is attached to CF(0) by a central stalk formed by the gamma and epsilon chains, while a peripheral stalk is formed by the delta and b chains.

The protein resides in the cell inner membrane. The catalysed reaction is ATP + H2O + 4 H(+)(in) = ADP + phosphate + 5 H(+)(out). Functionally, produces ATP from ADP in the presence of a proton gradient across the membrane. The catalytic sites are hosted primarily by the beta subunits. The chain is ATP synthase subunit beta from Thermotoga petrophila (strain ATCC BAA-488 / DSM 13995 / JCM 10881 / RKU-1).